A 399-amino-acid chain; its full sequence is Acetylornithine aminotransferase (399 aa).

Residues 102–103 (GA) and Phe-135 contribute to the pyridoxal 5'-phosphate site. Arg-138 lines the N(2)-acetyl-L-ornithine pocket. Position 220 to 223 (220 to 223 (DEIQ)) interacts with pyridoxal 5'-phosphate. Residue Lys-249 is modified to N6-(pyridoxal phosphate)lysine. Ser-277 is a binding site for N(2)-acetyl-L-ornithine. Thr-278 is a pyridoxal 5'-phosphate binding site.

It belongs to the class-III pyridoxal-phosphate-dependent aminotransferase family. ArgD subfamily. As to quaternary structure, homodimer. Pyridoxal 5'-phosphate is required as a cofactor.

It localises to the cytoplasm. The catalysed reaction is N(2)-acetyl-L-ornithine + 2-oxoglutarate = N-acetyl-L-glutamate 5-semialdehyde + L-glutamate. The protein operates within amino-acid biosynthesis; L-arginine biosynthesis; N(2)-acetyl-L-ornithine from L-glutamate: step 4/4. This is Acetylornithine aminotransferase from Oceanobacillus iheyensis (strain DSM 14371 / CIP 107618 / JCM 11309 / KCTC 3954 / HTE831).